A 642-amino-acid chain; its full sequence is Threonine--tRNA ligase (642 aa).

Residues 1-61 form the TGS domain; sequence MPVITLPDGS…ESDAQLAIIT (61 aa). Residues 243–534 form a catalytic region; sequence DHRKIGKQLD…LTEEYAGFYP (292 aa). Zn(2+)-binding residues include cysteine 334, histidine 385, and histidine 511.

This sequence belongs to the class-II aminoacyl-tRNA synthetase family. Homodimer. Zn(2+) is required as a cofactor.

Its subcellular location is the cytoplasm. It carries out the reaction tRNA(Thr) + L-threonine + ATP = L-threonyl-tRNA(Thr) + AMP + diphosphate + H(+). Functionally, catalyzes the attachment of threonine to tRNA(Thr) in a two-step reaction: L-threonine is first activated by ATP to form Thr-AMP and then transferred to the acceptor end of tRNA(Thr). Also edits incorrectly charged L-seryl-tRNA(Thr). In Serratia proteamaculans (strain 568), this protein is Threonine--tRNA ligase.